The primary structure comprises 215 residues: Large ribosomal subunit protein uL3 (215 aa).

Positions 136–155 (GVSISHRSHGSTGQRQDPGK) are disordered. Gln-151 is modified (N5-methylglutamine).

The protein belongs to the universal ribosomal protein uL3 family. In terms of assembly, part of the 50S ribosomal subunit. Forms a cluster with proteins L14 and L19. Methylated by PrmB.

Its function is as follows. One of the primary rRNA binding proteins, it binds directly near the 3'-end of the 23S rRNA, where it nucleates assembly of the 50S subunit. The protein is Large ribosomal subunit protein uL3 of Rickettsia africae (strain ESF-5).